We begin with the raw amino-acid sequence, 98 residues long: Beta-elicitin cinnamomin (98 aa).

Cystine bridges form between Cys-3–Cys-71, Cys-27–Cys-56, and Cys-51–Cys-95. Positions 33–42 match the Beak-like motif 1 (ligand binding) motif; sequence YSMLTATALP. The short motif at 72-83 is the Beak-like motif 2 (ligand binding) element; sequence DLTVPTSGLVLD.

The protein belongs to the elicitin family.

It is found in the secreted. Functionally, induces local and distal defense responses (incompatible hypersensitive reaction) in plants from the solanaceae and cruciferae families. Elicits leaf necrosis and causes the accumulation of pathogenesis-related proteins. Might interact with the lipidic molecules of the plasma membrane. Elicitins are able to load, carry, and transfer sterols between membranes. The protein is Beta-elicitin cinnamomin of Phytophthora cinnamomi (Cinnamon fungus).